The following is a 1028-amino-acid chain: Contactin-6 (1028 aa).

The first 19 residues, Met1–Gly19, serve as a signal peptide directing secretion. 6 consecutive Ig-like C2-type domains span residues Pro32 to Gln117, Glu122 to Gln208, Pro227 to Ala308, Pro318 to Arg402, Pro408 to Ile502, and Thr500 to Ser587. 6 disulfide bridges follow: Cys50–Cys100, Cys144–Cys196, Cys249–Cys297, Cys339–Cys386, Cys431–Cys479, and Cys521–Cys577. 2 N-linked (GlcNAc...) asparagine glycosylation sites follow: Asn65 and Asn193. Asn368, Asn377, and Asn468 each carry an N-linked (GlcNAc...) asparagine glycan. Fibronectin type-III domains lie at Pro600–Ser698, Ala703–Asp800, Ala805–Ser901, and Pro902–Ser996. Asn659, Asn765, Asn860, and Asn865 each carry an N-linked (GlcNAc...) asparagine glycan. Tyr882 is modified (phosphotyrosine). 4 N-linked (GlcNAc...) asparagine glycosylation sites follow: Asn895, Asn931, Asn956, and Asn957. Ser999 is lipidated: GPI-anchor amidated serine. Residues Thr1000–Arg1028 constitute a propeptide, removed in mature form.

The protein belongs to the immunoglobulin superfamily. Contactin family. In terms of assembly, interacts with PTPRG. In terms of tissue distribution, expressed in brain. In brain, it is preferentially expressed in the accessory olfactory bulb, layers II/III and V of the cerebral cortex, piriform cortex, anterior thalamic nuclei, locus coeruleus of the pons and mesencephalic trigeminal nucleus and in Purkinje cells of the cerebellum.

It localises to the cell membrane. Its function is as follows. Contactins mediate cell surface interactions during nervous system development. Participates in oligodendrocytes generation by acting as a ligand of NOTCH1. Its association with NOTCH1 promotes NOTCH1 activation through the released notch intracellular domain (NICD) and subsequent translocation to the nucleus. Involved in motor coordination. This chain is Contactin-6 (Cntn6), found in Mus musculus (Mouse).